The chain runs to 298 residues: Small ribosomal subunit biogenesis GTPase RsgA 1 (298 aa).

Positions 63 to 224 (QTQLVRPPVA…VADTPGFSSY (162 aa)) constitute a CP-type G domain. GTP is bound by residues 112–115 (AKTD) and 167–175 (GQTGAGKST). Zn(2+) contacts are provided by cysteine 248, cysteine 253, histidine 255, and cysteine 261.

The protein belongs to the TRAFAC class YlqF/YawG GTPase family. RsgA subfamily. Monomer. Associates with 30S ribosomal subunit, binds 16S rRNA. Requires Zn(2+) as cofactor.

The protein localises to the cytoplasm. Its function is as follows. One of several proteins that assist in the late maturation steps of the functional core of the 30S ribosomal subunit. Helps release RbfA from mature subunits. May play a role in the assembly of ribosomal proteins into the subunit. Circularly permuted GTPase that catalyzes slow GTP hydrolysis, GTPase activity is stimulated by the 30S ribosomal subunit. The chain is Small ribosomal subunit biogenesis GTPase RsgA 1 from Lactiplantibacillus plantarum (strain ATCC BAA-793 / NCIMB 8826 / WCFS1) (Lactobacillus plantarum).